Here is a 371-residue protein sequence, read N- to C-terminus: Probable endolytic peptidoglycan transglycosylase RlpA (371 aa).

The signal sequence occupies residues 1 to 25; the sequence is MNQRHLWTIVALSVTVLGTPAVGRT. Residues 177–191 are compositionally biased toward low complexity; sequence LVASQSQNKSSSSQQ. The tract at residues 177-196 is disordered; the sequence is LVASQSQNKSSSSQQKSERY.

Belongs to the RlpA family.

Functionally, lytic transglycosylase with a strong preference for naked glycan strands that lack stem peptides. The protein is Probable endolytic peptidoglycan transglycosylase RlpA of Nostoc sp. (strain PCC 7120 / SAG 25.82 / UTEX 2576).